The chain runs to 172 residues: MAKMQAKVQADERDDGLREKMISVNRVTKVVKGGRILGFAALTVVGDGDGRVGMGKGKAKEVPVAVQKAMEQARRNMFKVPLKNGTLQHEVHGKHGASTVLLAPAKDGTGVIAGGPMRAVFDVMGVQNVVAKSHGSTNPYNLVRATLDGLRKQSTPADIAAKRGKSVEDILG.

Positions 17-80 constitute an S5 DRBM domain; it reads LREKMISVNR…EQARRNMFKV (64 aa).

Belongs to the universal ribosomal protein uS5 family. In terms of assembly, part of the 30S ribosomal subunit. Contacts proteins S4 and S8.

Its function is as follows. With S4 and S12 plays an important role in translational accuracy. In terms of biological role, located at the back of the 30S subunit body where it stabilizes the conformation of the head with respect to the body. The polypeptide is Small ribosomal subunit protein uS5 (Paraburkholderia phymatum (strain DSM 17167 / CIP 108236 / LMG 21445 / STM815) (Burkholderia phymatum)).